Here is a 1033-residue protein sequence, read N- to C-terminus: Putative U-box domain-containing protein 42 (1033 aa).

A disordered region spans residues 145–226; sequence SQSQMTDIPD…SSNASSQRKY (82 aa). The segment covering 200–226 has biased composition (polar residues); it reads LSKSQSQSTEIPDIPSQSSNASSQRKY. Residues 245-322 enclose the U-box domain; sequence PPYQAFICPL…QEWKVRNEAA (78 aa). ARM repeat units lie at residues 483–522, 523–562, 564–608, 610–659, and 665–704; these read PENI…EIDI, GHEK…HISL, HPNN…NILE, GLEH…SLSK, and ATIV…ALTP.

It catalyses the reaction S-ubiquitinyl-[E2 ubiquitin-conjugating enzyme]-L-cysteine + [acceptor protein]-L-lysine = [E2 ubiquitin-conjugating enzyme]-L-cysteine + N(6)-ubiquitinyl-[acceptor protein]-L-lysine.. It participates in protein modification; protein ubiquitination. Functions as an E3 ubiquitin ligase. This chain is Putative U-box domain-containing protein 42 (PUB42), found in Arabidopsis thaliana (Mouse-ear cress).